We begin with the raw amino-acid sequence, 254 residues long: Probable pectate lyase E (254 aa).

The signal sequence occupies residues 1 to 17 (MYQPLLLLPLLLTSAFA). An N-linked (GlcNAc...) asparagine glycan is attached at asparagine 175. The interval 228–254 (DNNKKEPAKKSSGPSNACKYKEPLASC) is disordered.

This sequence belongs to the polysaccharide lyase 3 family. It depends on Ca(2+) as a cofactor.

The protein resides in the secreted. The enzyme catalyses Eliminative cleavage of (1-&gt;4)-alpha-D-galacturonan to give oligosaccharides with 4-deoxy-alpha-D-galact-4-enuronosyl groups at their non-reducing ends.. Pectinolytic enzyme consist of four classes of enzymes: pectin lyase, polygalacturonase, pectin methylesterase and rhamnogalacturonase. Among pectinolytic enzymes, pectin lyase is the most important in depolymerization of pectin, since it cleaves internal glycosidic bonds of highly methylated pectins. Favors pectate, the anion, over pectin, the methyl ester. In Aspergillus fumigatus (strain ATCC MYA-4609 / CBS 101355 / FGSC A1100 / Af293) (Neosartorya fumigata), this protein is Probable pectate lyase E (plyE).